The chain runs to 847 residues: Ras GTPase-activating protein 2 (847 aa).

Low complexity predominate over residues 1–21 (MAAAAPAAAASPEAPAVSGSA). The disordered stretch occupies residues 1–31 (MAAAAPAAAASPEAPAVSGSADPETGDEDSR). Residue Ala-2 is modified to N-acetylalanine. C2 domains are found at residues 19 to 137 (GSAD…ETWF) and 148 to 288 (VQGK…QAWY). Positions 371-588 (NKLVPFITAV…TDVKKFLDEI (218 aa)) constitute a Ras-GAP domain. Ser-554 carries the phosphoserine modification. One can recognise a PH domain in the interval 603–704 (VHLKEGEMYK…WIDVLCRVSR (102 aa)). A Btk-type zinc finger spans residues 706-742 (NHNRLSSFHPSAYLNGNWLCCQETSESTPGCKPCTAG). His-714, Cys-725, Cys-726, and Cys-736 together coordinate Zn(2+). Residues 819–847 (DEPHEKYRKKRSSSAKYGSKENPIVGKIS) are disordered.

It localises to the cell membrane. In terms of biological role, inhibitory regulator of the Ras-cyclic AMP pathway. Binds inositol tetrakisphosphate (IP4) and phospholipids. The chain is Ras GTPase-activating protein 2 (Rasa2) from Mus musculus (Mouse).